Consider the following 662-residue polypeptide: Probable protein phosphatase 2C 4 (662 aa).

Phosphoserine is present on S153. Residues 249–653 form the PPM-type phosphatase domain; it reads DVSLENQNLQ…DDVSIVVISL (405 aa). Residues D286, G287, D581, and D644 each contribute to the Mn(2+) site.

This sequence belongs to the PP2C family. Mg(2+) serves as cofactor. Requires Mn(2+) as cofactor. In terms of tissue distribution, expressed in seedlings, roots, leaves, stems, young inflorescences, flowers and siliques.

It is found in the nucleus. It catalyses the reaction O-phospho-L-seryl-[protein] + H2O = L-seryl-[protein] + phosphate. The catalysed reaction is O-phospho-L-threonyl-[protein] + H2O = L-threonyl-[protein] + phosphate. Its function is as follows. Involved in leaf development regulation. The chain is Probable protein phosphatase 2C 4 (PLL5) from Arabidopsis thaliana (Mouse-ear cress).